Here is a 316-residue protein sequence, read N- to C-terminus: tRNA dimethylallyltransferase (316 aa).

Residue 13–20 coordinates ATP; it reads GPTASGKT. 15 to 20 provides a ligand contact to substrate; that stretch reads TASGKT. Interaction with substrate tRNA stretches follow at residues 38–41, 162–166, 243–248, and 276–283; these read DSAL, QRINR, RCVGYR, and KRQITWLR.

This sequence belongs to the IPP transferase family. As to quaternary structure, monomer. Mg(2+) serves as cofactor.

It carries out the reaction adenosine(37) in tRNA + dimethylallyl diphosphate = N(6)-dimethylallyladenosine(37) in tRNA + diphosphate. Catalyzes the transfer of a dimethylallyl group onto the adenine at position 37 in tRNAs that read codons beginning with uridine, leading to the formation of N6-(dimethylallyl)adenosine (i(6)A). The protein is tRNA dimethylallyltransferase of Pasteurella multocida (strain Pm70).